A 332-amino-acid polypeptide reads, in one-letter code: Ribosomal RNA small subunit methyltransferase H (332 aa).

S-adenosyl-L-methionine-binding positions include 36 to 38 (GGY), D54, F81, D102, and Q109. A disordered region spans residues 284–332 (VTAGQEEVSANPRARSAKLRAAERTAAPATADDGESPGWPSLANVMRGG).

This sequence belongs to the methyltransferase superfamily. RsmH family.

It is found in the cytoplasm. It carries out the reaction cytidine(1402) in 16S rRNA + S-adenosyl-L-methionine = N(4)-methylcytidine(1402) in 16S rRNA + S-adenosyl-L-homocysteine + H(+). Functionally, specifically methylates the N4 position of cytidine in position 1402 (C1402) of 16S rRNA. The chain is Ribosomal RNA small subunit methyltransferase H from Nitrobacter hamburgensis (strain DSM 10229 / NCIMB 13809 / X14).